Consider the following 155-residue polypeptide: Small ribosomal subunit protein uS7c (155 aa).

Belongs to the universal ribosomal protein uS7 family. In terms of assembly, part of the 30S ribosomal subunit.

Its subcellular location is the plastid. It localises to the chloroplast. In terms of biological role, one of the primary rRNA binding proteins, it binds directly to 16S rRNA where it nucleates assembly of the head domain of the 30S subunit. This chain is Small ribosomal subunit protein uS7c (rps7), found in Ginkgo biloba (Ginkgo).